Consider the following 126-residue polypeptide: Glycerol dehydrogenase small subunit (126 aa).

Helical transmembrane passes span 13 to 33, 41 to 61, 67 to 87, and 92 to 112; these read WLTL…VIAG, GSVY…FMLM, AFLY…EVGF, and LLPR…TIPV.

The protein localises to the cell membrane. The catalysed reaction is glycerol + A = dihydroxyacetone + AH2. Functionally, catalyzes the oxidation of glycerol to glycerone. Also acts, more slowly, on a number of other polyols including D-sorbitol, D-arabinitol, D-mannitol, meso-erythritol, adonitol and propylene glycol. This is Glycerol dehydrogenase small subunit (sldB) from Gluconobacter oxydans (strain 621H) (Gluconobacter suboxydans).